Consider the following 400-residue polypeptide: Acetate kinase (400 aa).

Asn10 lines the Mg(2+) pocket. Residue Lys17 participates in ATP binding. Arg91 lines the substrate pocket. The active-site Proton donor/acceptor is the Asp150. ATP is bound by residues 210–214 (HLGNG), 285–287 (DCR), and 333–337 (GIGEN). Glu387 contributes to the Mg(2+) binding site.

This sequence belongs to the acetokinase family. As to quaternary structure, homodimer. It depends on Mg(2+) as a cofactor. The cofactor is Mn(2+).

The protein localises to the cytoplasm. The enzyme catalyses acetate + ATP = acetyl phosphate + ADP. The protein operates within metabolic intermediate biosynthesis; acetyl-CoA biosynthesis; acetyl-CoA from acetate: step 1/2. In terms of biological role, catalyzes the formation of acetyl phosphate from acetate and ATP. Can also catalyze the reverse reaction. The polypeptide is Acetate kinase (Escherichia coli O157:H7).